The sequence spans 502 residues: NAD(P)H-quinone oxidoreductase chain 4, chloroplastic (502 aa).

A run of 13 helical transmembrane segments spans residues 4 to 24 (YPWL…IPLL), 39 to 59 (LGIC…HFDI), 89 to 109 (IGLT…AWPV), 115 to 132 (LFHS…GLFT), 136 to 156 (ILLF…LLSM), 169 to 189 (FILY…TMGL), 209 to 229 (IALE…KLPI), 244 to 264 (HYST…YGLI), 276 to 296 (SIFA…AASI), 315 to 335 (MGFV…GAIL), 387 to 407 (SLAL…PGIV), 418 to 438 (IIIT…LLSM), and 466 to 486 (IFIS…PNLI).

It belongs to the complex I subunit 4 family.

Its subcellular location is the plastid. The protein localises to the chloroplast thylakoid membrane. The enzyme catalyses a plastoquinone + NADH + (n+1) H(+)(in) = a plastoquinol + NAD(+) + n H(+)(out). The catalysed reaction is a plastoquinone + NADPH + (n+1) H(+)(in) = a plastoquinol + NADP(+) + n H(+)(out). This is NAD(P)H-quinone oxidoreductase chain 4, chloroplastic from Huperzia lucidula (Shining clubmoss).